The sequence spans 167 residues: NADH-quinone oxidoreductase subunit I (167 aa).

4Fe-4S ferredoxin-type domains are found at residues 59–88 (RKYK…IEAQ) and 98–127 (VRYD…EGPN). 8 residues coordinate [4Fe-4S] cluster: C68, C71, C74, C78, C107, C110, C113, and C117.

Belongs to the complex I 23 kDa subunit family. NDH-1 is composed of 14 different subunits. Subunits NuoA, H, J, K, L, M, N constitute the membrane sector of the complex. [4Fe-4S] cluster is required as a cofactor.

Its subcellular location is the cell inner membrane. It catalyses the reaction a quinone + NADH + 5 H(+)(in) = a quinol + NAD(+) + 4 H(+)(out). Functionally, NDH-1 shuttles electrons from NADH, via FMN and iron-sulfur (Fe-S) centers, to quinones in the respiratory chain. The immediate electron acceptor for the enzyme in this species is believed to be ubiquinone. Couples the redox reaction to proton translocation (for every two electrons transferred, four hydrogen ions are translocated across the cytoplasmic membrane), and thus conserves the redox energy in a proton gradient. The polypeptide is NADH-quinone oxidoreductase subunit I (Ehrlichia canis (strain Jake)).